A 209-amino-acid polypeptide reads, in one-letter code: Large ribosomal subunit protein uL3 (209 aa).

Residues 119 to 145 (AIKRHGQSRGPMSHGSHFHRAPGSVGM) form a disordered region.

This sequence belongs to the universal ribosomal protein uL3 family. As to quaternary structure, part of the 50S ribosomal subunit. Forms a cluster with proteins L14 and L19.

In terms of biological role, one of the primary rRNA binding proteins, it binds directly near the 3'-end of the 23S rRNA, where it nucleates assembly of the 50S subunit. This is Large ribosomal subunit protein uL3 from Staphylococcus aureus (strain COL).